Here is a 122-residue protein sequence, read N- to C-terminus: Putative cryptic phosphonate transport system permease protein PhnE2 (122 aa).

The ABC transmembrane type-1 domain occupies 1–114 (MLALFIHTTG…VTVSLLDFLS (114 aa)). 4 consecutive transmembrane segments (helical) span residues 3 to 23 (ALFI…VEAI), 39 to 59 (LEEI…SYSL), 68 to 88 (SATV…WEAI), and 93 to 113 (FQQT…LDFL).

The protein belongs to the binding-protein-dependent transport system permease family. As to quaternary structure, if the reading frame is restored, the complex is composed of two ATP-binding proteins (PhnC), two transmembrane proteins (PhnE) and a solute-binding protein (PhnD).

The protein localises to the cell inner membrane. C-terminal fragment of the PhnE protein, part of a phosphonate usage operon that is cryptic in K12 strains. Growth of K12 strains on phosphonate can be observed when it is used as the sole phosphorus source after a 60 hour lag period, suggesting the operon is activated. An intact PhnE in strain B is (AC A0A140NFA3). Part of the binding-protein-dependent transport system for phosphonates; probably responsible for the translocation of the substrate across the membrane. This is Putative cryptic phosphonate transport system permease protein PhnE2 (phnE) from Escherichia coli (strain K12).